Here is a 117-residue protein sequence, read N- to C-terminus: Putative hydrolase fragment YghX (117 aa).

The tract at residues 91 to 117 (DGLSSVGGYPGNDDKGRELQQQVDPTN) is disordered.

This Escherichia coli (strain K12) protein is Putative hydrolase fragment YghX (yghX).